We begin with the raw amino-acid sequence, 31 residues long: Photosystem I reaction center subunit XII (31 aa).

The chain crosses the membrane as a helical span at residues 7 to 26; the sequence is QVYVALVIALLPAVLAFRLS.

This sequence belongs to the PsaM family.

It localises to the cellular thylakoid membrane. The chain is Photosystem I reaction center subunit XII from Thermosynechococcus vestitus (strain NIES-2133 / IAM M-273 / BP-1).